Consider the following 213-residue polypeptide: Probable nicotinate-nucleotide adenylyltransferase (213 aa).

Belongs to the NadD family.

The enzyme catalyses nicotinate beta-D-ribonucleotide + ATP + H(+) = deamido-NAD(+) + diphosphate. Its pathway is cofactor biosynthesis; NAD(+) biosynthesis; deamido-NAD(+) from nicotinate D-ribonucleotide: step 1/1. In terms of biological role, catalyzes the reversible adenylation of nicotinate mononucleotide (NaMN) to nicotinic acid adenine dinucleotide (NaAD). This chain is Probable nicotinate-nucleotide adenylyltransferase, found in Salmonella gallinarum (strain 287/91 / NCTC 13346).